Consider the following 501-residue polypeptide: Cilia- and flagella-associated protein 45 (501 aa).

Positions 75–114 form a coiled coil; sequence MTAEDVAAAKREAEAKREQLQAVSKARKEKMLKLEEEAKK.

It belongs to the CFAP45 family.

It localises to the cell projection. It is found in the cilium. Its subcellular location is the flagellum. This Chlamydomonas reinhardtii (Chlamydomonas smithii) protein is Cilia- and flagella-associated protein 45.